Consider the following 261-residue polypeptide: Cytochrome c oxidase subunit 3 (261 aa).

Residues 1 to 15 (MAHQAHPYHMVDPSP) are Mitochondrial matrix-facing. A helical transmembrane segment spans residues 16–34 (WPLTGATAALLMTSGLAIW). Residues 35-40 (FHFHSL) lie on the Mitochondrial intermembrane side of the membrane. A helical membrane pass occupies residues 41 to 66 (LLLYLGLTLLLLTMIQWWRDIIREGT). Topologically, residues 67 to 72 (FQGHHT) are mitochondrial matrix. The helical transmembrane segment at 73 to 105 (PPVQKGLRYGMILFIVSEVFFFLGFFWAFYHSS) threads the bilayer. Topologically, residues 106-128 (LAPTPELGGCWPPTGINPLDPFE) are mitochondrial intermembrane. A helical membrane pass occupies residues 129–152 (VPLLNTAVLLASGVTVTWAHHGLM). Residues 153-155 (EGN) are Mitochondrial matrix-facing. The helical transmembrane segment at 156-183 (RKEAIQALTLTIILGVYFTALQAMEYYE) threads the bilayer. At 184–190 (APFTIAD) the chain is on the mitochondrial intermembrane side. The helical transmembrane segment at 191–223 (GVYGTTFFVATGFHGLHVIIGSTFLAVCLLRQV) threads the bilayer. The Mitochondrial matrix segment spans residues 224-232 (LYHFTSEHH). A helical membrane pass occupies residues 233–256 (FGFEAAAWYWHFVDVVWLFLYVSI). At 257 to 261 (YWWGS) the chain is on the mitochondrial intermembrane side.

It belongs to the cytochrome c oxidase subunit 3 family. Component of the cytochrome c oxidase (complex IV, CIV), a multisubunit enzyme composed of 14 subunits. The complex is composed of a catalytic core of 3 subunits MT-CO1, MT-CO2 and MT-CO3, encoded in the mitochondrial DNA, and 11 supernumerary subunits COX4I, COX5A, COX5B, COX6A, COX6B, COX6C, COX7A, COX7B, COX7C, COX8 and NDUFA4, which are encoded in the nuclear genome. The complex exists as a monomer or a dimer and forms supercomplexes (SCs) in the inner mitochondrial membrane with NADH-ubiquinone oxidoreductase (complex I, CI) and ubiquinol-cytochrome c oxidoreductase (cytochrome b-c1 complex, complex III, CIII), resulting in different assemblies (supercomplex SCI(1)III(2)IV(1) and megacomplex MCI(2)III(2)IV(2)).

It localises to the mitochondrion inner membrane. It carries out the reaction 4 Fe(II)-[cytochrome c] + O2 + 8 H(+)(in) = 4 Fe(III)-[cytochrome c] + 2 H2O + 4 H(+)(out). Its function is as follows. Component of the cytochrome c oxidase, the last enzyme in the mitochondrial electron transport chain which drives oxidative phosphorylation. The respiratory chain contains 3 multisubunit complexes succinate dehydrogenase (complex II, CII), ubiquinol-cytochrome c oxidoreductase (cytochrome b-c1 complex, complex III, CIII) and cytochrome c oxidase (complex IV, CIV), that cooperate to transfer electrons derived from NADH and succinate to molecular oxygen, creating an electrochemical gradient over the inner membrane that drives transmembrane transport and the ATP synthase. Cytochrome c oxidase is the component of the respiratory chain that catalyzes the reduction of oxygen to water. Electrons originating from reduced cytochrome c in the intermembrane space (IMS) are transferred via the dinuclear copper A center (CU(A)) of subunit 2 and heme A of subunit 1 to the active site in subunit 1, a binuclear center (BNC) formed by heme A3 and copper B (CU(B)). The BNC reduces molecular oxygen to 2 water molecules using 4 electrons from cytochrome c in the IMS and 4 protons from the mitochondrial matrix. This is Cytochrome c oxidase subunit 3 (MT-CO3) from Scyliorhinus canicula (Small-spotted catshark).